The primary structure comprises 122 residues: Protein YqjC (122 aa).

The first 20 residues, 1–20, serve as a signal peptide directing secretion; the sequence is MKYRIALAVSLFALSAGSYA. A disordered region spans residues 65–100; the sequence is QLRADHQKKIAKQKDEVAERQQDLAEAKQKGDADKI. Residues 66 to 100 are compositionally biased toward basic and acidic residues; sequence LRADHQKKIAKQKDEVAERQQDLAEAKQKGDADKI.

The chain is Protein YqjC (yqjC) from Escherichia coli (strain K12).